The following is a 44-amino-acid chain: Thymosin beta-4 (44 aa).

2 stretches are compositionally biased toward basic and acidic residues: residues 1 to 25 and 33 to 44; these read MSDKPDMAEIEKFDKAKLKKTETQE and ETIEQEKQTSES. Residues 1 to 44 are disordered; that stretch reads MSDKPDMAEIEKFDKAKLKKTETQEKNPLPSKETIEQEKQTSES. An N-acetylserine modification is found at serine 2.

This sequence belongs to the thymosin beta family. Spleen, kidney, heart, and oocytes.

The protein resides in the cytoplasm. It localises to the cytoskeleton. In terms of biological role, plays an important role in the organization of the cytoskeleton. Binds to and sequesters actin monomers (G actin) and therefore inhibits actin polymerization. The protein is Thymosin beta-4 (tmsb4) of Xenopus laevis (African clawed frog).